Here is a 63-residue protein sequence, read N- to C-terminus: Anionic peptide 10.1 (63 aa).

A signal peptide spans 1–20 (MISRFCLLFLLVFVVSKIQA).

Belongs to the non-disulfide-bridged peptide (NDBP) superfamily. Long chain multifunctional peptide (group 2) family. Expressed by the venom gland.

It localises to the secreted. This Lychas mucronatus (Chinese swimming scorpion) protein is Anionic peptide 10.1.